The chain runs to 698 residues: Inner centromere protein SLI15 (698 aa).

Ser268 carries the post-translational modification Phosphoserine. 3 disordered regions span residues 365 to 390 (KNKI…FDKT), 405 to 444 (EQKK…EVKN), and 455 to 474 (RPTK…TSQT). Polar residues-rich tracts occupy residues 422 to 439 (RPHS…SSPS) and 459 to 474 (ASIS…TSQT). Position 489 is a phosphoserine (Ser489). Positions 535–560 (IMRSQQEHHRRKQEKQKRMSHLEQDL) are disordered. A compositionally biased stretch (basic and acidic residues) spans 550–560 (QKRMSHLEQDL).

It belongs to the INCENP family. Component of the CPC complex at least composed of IPL1, BIR1 and SLI15. Phosphorylated by serine/threonine protein kinase IPL1.

It localises to the nucleus. The protein resides in the cytoplasm. It is found in the cytoskeleton. Its subcellular location is the spindle. The protein localises to the chromosome. It localises to the centromere. The protein resides in the kinetochore. Its function is as follows. Component of the chromosomal passenger complex (CPC), a complex that acts as a key regulator of mitosis. Stimulates IPL1 kinase activity and facilitates its association with the mitotic spindle. Has a role in attaching the kinetochores to the microtubules and ensuring that sister kinetochores connect to opposite poles. In Saccharomyces cerevisiae (strain ATCC 204508 / S288c) (Baker's yeast), this protein is Inner centromere protein SLI15 (SLI15).